The sequence spans 496 residues: Beta-N-acetylhexosaminidase (496 aa).

The active-site Proton donor is E298.

It belongs to the glycosyl hydrolase 20 family.

The catalysed reaction is Hydrolysis of terminal non-reducing N-acetyl-D-hexosamine residues in N-acetyl-beta-D-hexosaminides.. It participates in glycan degradation; chitin degradation. Functionally, catalyzes the cleavage of beta-N-acetylglucosaminides and beta-N-acetylgalactosaminides. Also catalyzes the hydrolysis of N-acetylchitooligomers. May be involved in chitin degradation. It is not able to cleave beta-glucosides. In Cellulomonas fimi, this protein is Beta-N-acetylhexosaminidase (hex20).